The following is a 208-amino-acid chain: Large ribosomal subunit protein bL25 (208 aa).

The protein belongs to the bacterial ribosomal protein bL25 family. CTC subfamily. Part of the 50S ribosomal subunit; part of the 5S rRNA/L5/L18/L25 subcomplex. Contacts the 5S rRNA. Binds to the 5S rRNA independently of L5 and L18.

Functionally, this is one of the proteins that binds to the 5S RNA in the ribosome where it forms part of the central protuberance. The polypeptide is Large ribosomal subunit protein bL25 (Phenylobacterium zucineum (strain HLK1)).